The primary structure comprises 198 residues: uncharacterized protein (198 aa).

The signal sequence occupies residues 1-28; the sequence is MHPTQRKLMKRIILFLSLLFCIACPAIA.

This sequence belongs to the fimbrial protein family.

The protein resides in the fimbrium. Functionally, part of the yadCKLM-htrE-yadVN fimbrial operon. Could contribute to adhesion to various surfaces in specific environmental niches. This is an uncharacterized protein from Escherichia coli (strain K12).